The chain runs to 565 residues: Adenine deaminase (565 aa).

It belongs to the metallo-dependent hydrolases superfamily. Adenine deaminase family. Mn(2+) serves as cofactor.

The enzyme catalyses adenine + H2O + H(+) = hypoxanthine + NH4(+). This is Adenine deaminase from Gluconobacter oxydans (strain 621H) (Gluconobacter suboxydans).